We begin with the raw amino-acid sequence, 165 residues long: SsrA-binding protein (165 aa).

Residues 135–158 (QAHDKRQDMARRDAQREVTRELGR) show a composition bias toward basic and acidic residues. The interval 135 to 165 (QAHDKRQDMARRDAQREVTRELGRRVKGMTN) is disordered.

The protein belongs to the SmpB family.

It localises to the cytoplasm. Its function is as follows. Required for rescue of stalled ribosomes mediated by trans-translation. Binds to transfer-messenger RNA (tmRNA), required for stable association of tmRNA with ribosomes. tmRNA and SmpB together mimic tRNA shape, replacing the anticodon stem-loop with SmpB. tmRNA is encoded by the ssrA gene; the 2 termini fold to resemble tRNA(Ala) and it encodes a 'tag peptide', a short internal open reading frame. During trans-translation Ala-aminoacylated tmRNA acts like a tRNA, entering the A-site of stalled ribosomes, displacing the stalled mRNA. The ribosome then switches to translate the ORF on the tmRNA; the nascent peptide is terminated with the 'tag peptide' encoded by the tmRNA and targeted for degradation. The ribosome is freed to recommence translation, which seems to be the essential function of trans-translation. The sequence is that of SsrA-binding protein from Mycolicibacterium gilvum (strain PYR-GCK) (Mycobacterium gilvum (strain PYR-GCK)).